A 273-amino-acid polypeptide reads, in one-letter code: 4-hydroxy-tetrahydrodipicolinate reductase (273 aa).

NAD(+) contacts are provided by residues G12 to M17 and E38. An NADP(+)-binding site is contributed by R39. Residues G102–T104 and A126–F129 contribute to the NAD(+) site. Residue H159 is the Proton donor/acceptor of the active site. H160 lines the (S)-2,3,4,5-tetrahydrodipicolinate pocket. K163 acts as the Proton donor in catalysis. Position 169-170 (G169–T170) interacts with (S)-2,3,4,5-tetrahydrodipicolinate.

It belongs to the DapB family. In terms of assembly, homotetramer.

The protein resides in the cytoplasm. It carries out the reaction (S)-2,3,4,5-tetrahydrodipicolinate + NAD(+) + H2O = (2S,4S)-4-hydroxy-2,3,4,5-tetrahydrodipicolinate + NADH + H(+). The enzyme catalyses (S)-2,3,4,5-tetrahydrodipicolinate + NADP(+) + H2O = (2S,4S)-4-hydroxy-2,3,4,5-tetrahydrodipicolinate + NADPH + H(+). The protein operates within amino-acid biosynthesis; L-lysine biosynthesis via DAP pathway; (S)-tetrahydrodipicolinate from L-aspartate: step 4/4. Its function is as follows. Catalyzes the conversion of 4-hydroxy-tetrahydrodipicolinate (HTPA) to tetrahydrodipicolinate. This is 4-hydroxy-tetrahydrodipicolinate reductase from Escherichia coli O157:H7.